The following is an 825-amino-acid chain: Taste receptor cell protein 1 (825 aa).

The first 21 residues, 1–21, serve as a signal peptide directing secretion; the sequence is MDKQWFPAAGILLAALLVVSA. 2 disordered regions span residues 66-97 and 299-322; these read EREP…GPSG and TSPS…SASP. Residues 302–322 are compositionally biased toward low complexity; sequence SQASSLHSPRPSSASPLSASP.

As to expression, expression is restricted to circumvallate papillae.

This is Taste receptor cell protein 1 (Trcg1) from Mus musculus (Mouse).